The primary structure comprises 1173 residues: MAVETLSPDWEFDRVDDGSQKIHAEVQLKNYGKFLEEYTSQLRRIEDALDDSIGDVWDFNLDPIALKLLPYEQSSLLELIKTENKVLNKVITVYAALCCEIKKLKYEAETKFYNGLLFYGEGATDASMVEGDCQIQMGRFISFLQELSCFVTRCYEVVMNVVHQLAALYISNKIAPKIIETTGVHFQTMYEHLGELLTVLLTLDEIIDNHITLKDHWTMYKRLLKSVHHNPSKFGIQEEKLKPFEKFLLKLEGQLLDGMIFQACIEQQFDSLNGGVSVSKNSTFAEEFAHSIRSIFANVEAKLGEPSEIDQRDKYVGICGLFVLHFQIFRTIDKKFYKSLLDICKKVPAITLTANIIWFPDNFLIQKIPAAAKLLDRKSLQAIKIHRDTFLQQKAQSLTKDVQSYYVFVSSWMMKMESILSKEQRMDKFAEDLTNRCNVFIQGFLYAYSISTIIKTTMNLYMSMQKPMTKTSVKALCRLVELLKAIEHMFYRRSMVVADSVSHITQHLQHQALHSISVAKKRVISDKKYSEQRLDVLSALVLAENTLNGPSTKQRRLIVSLALSVGTQMKTFKDEELFPLQVVMKKLDLISELRERVQTQCDCCFLYWHRAVFPIYLDDVYENAVDAARLHYMFSALRDCVPAMMHARHLESYEILLDCYDKEIMEILNEHLLDKLCKEIEKDLRLSVHTHLKLDDRNPFKVGMKDLALFFSLNPIRFFNRFIDIRAYVTHYLDKTFYNLTTVALHDWATYSEMRNLATQRYGLVMTEAHLPSQTLEQGLDVLEIMRNIHIFVSRYLYNLNNQIFIERTSNNKHLNTINIRHIANSIRTHGTGIMNTTVNFTYQFLKKKFYIFSQFMYDEHIKSRLIKDIRFFREIKDQNDHKYPFDRAEKFNRGIRKLGVTPEGQSYLDQFRQLISQIGNAMGYVRMIRSGGLHCSSNAIRFVPDLEDIVNFEELVKEEGLAEETLKAARHLDSVLSDHTRNSAEGTEYFKMLVDVFAPEFRRPKNIHLRNFYIIVPPLTLNFVEHSISCKEKLNKKNKIGAAFTDDGFAMGVAYILKLLDQYREFDSLHWFQSVREKYLKEIRAVAKQQNVQSASQDEKLLQTMNLTQKRLDVYLQEFELLYFSLSSARIFFRADKTAAEENQEKKEKEEETKTSNGDLSDSTVSADPVVK.

An N-acetylalanine modification is found at alanine 2. At serine 7 the chain carries Phosphoserine. The segment at 705–1173 (KDLALFFSLN…STVSADPVVK (469 aa)) is sufficient for interaction with WASHC5. Residues 1135-1161 (RADKTAAEENQEKKEKEEETKTSNGDL) are a coiled coil. Over residues 1142-1155 (EENQEKKEKEEETK) the composition is skewed to basic and acidic residues. A disordered region spans residues 1142-1173 (EENQEKKEKEEETKTSNGDLSDSTVSADPVVK). Threonine 1154 carries the post-translational modification Phosphothreonine. Polar residues predominate over residues 1157–1167 (SNGDLSDSTVS).

This sequence belongs to the SWIP family. Component of the WASH core complex also described as WASH regulatory complex (SHRC) composed of WASH (WASHC1, WASH2P or WASH3P), WASHC2 (WASHC2A or WASHC2C), WASHC3, WASHC4 and WASHC5. The WASH core complex associates via WASHC2 with the F-actin-capping protein dimer (formed by CAPZA1, CAPZA2 or CAPZA3 and CAPZB) in a transient or substoichiometric manner which was initially described as WASH complex.

The protein localises to the early endosome. Acts as a component of the WASH core complex that functions as a nucleation-promoting factor (NPF) at the surface of endosomes, where it recruits and activates the Arp2/3 complex to induce actin polymerization, playing a key role in the fission of tubules that serve as transport intermediates during endosome sorting. The polypeptide is WASH complex subunit 4 (Homo sapiens (Human)).